Consider the following 197-residue polypeptide: Protein GrpE (197 aa).

A disordered region spans residues 1-39; it reads MSSKEQKTPEGQAPEEIIMDQHEEIEAVEPEASAEQVDP.

It belongs to the GrpE family. In terms of assembly, homodimer.

It localises to the cytoplasm. Functionally, participates actively in the response to hyperosmotic and heat shock by preventing the aggregation of stress-denatured proteins, in association with DnaK and GrpE. It is the nucleotide exchange factor for DnaK and may function as a thermosensor. Unfolded proteins bind initially to DnaJ; upon interaction with the DnaJ-bound protein, DnaK hydrolyzes its bound ATP, resulting in the formation of a stable complex. GrpE releases ADP from DnaK; ATP binding to DnaK triggers the release of the substrate protein, thus completing the reaction cycle. Several rounds of ATP-dependent interactions between DnaJ, DnaK and GrpE are required for fully efficient folding. The sequence is that of Protein GrpE from Escherichia coli O45:K1 (strain S88 / ExPEC).